Reading from the N-terminus, the 139-residue chain is Large ribosomal subunit protein bL20 (139 aa).

Belongs to the bacterial ribosomal protein bL20 family.

In terms of biological role, binds directly to 23S ribosomal RNA and is necessary for the in vitro assembly process of the 50S ribosomal subunit. It is not involved in the protein synthesizing functions of that subunit. The protein is Large ribosomal subunit protein bL20 of Leuconostoc citreum (strain KM20).